The primary structure comprises 165 residues: Probable velvet family sexual development regulator CC1G_12219 (165 aa).

The Velvet domain maps to 1 to 121 (MSNTDAQTSF…SVWGAQVNVR (121 aa)).

Belongs to the velvet family.

It localises to the nucleus. Functionally, velvet-domain-containing protein that probably acts as a positive regulator of sexual development. The chain is Probable velvet family sexual development regulator CC1G_12219 from Coprinopsis cinerea (strain Okayama-7 / 130 / ATCC MYA-4618 / FGSC 9003) (Inky cap fungus).